We begin with the raw amino-acid sequence, 337 residues long: DNA-directed RNA polymerase subunit alpha (337 aa).

An alpha N-terminal domain (alpha-NTD) region spans residues 1-233 (MVREKVTVST…DLFIPFLHME (233 aa)). Positions 264–337 (NKKIALKSIF…FVIDLAKNKF (74 aa)) are alpha C-terminal domain (alpha-CTD).

It belongs to the RNA polymerase alpha chain family. In plastids the minimal PEP RNA polymerase catalytic core is composed of four subunits: alpha, beta, beta', and beta''. When a (nuclear-encoded) sigma factor is associated with the core the holoenzyme is formed, which can initiate transcription.

The protein localises to the plastid. The protein resides in the chloroplast. The catalysed reaction is RNA(n) + a ribonucleoside 5'-triphosphate = RNA(n+1) + diphosphate. Its function is as follows. DNA-dependent RNA polymerase catalyzes the transcription of DNA into RNA using the four ribonucleoside triphosphates as substrates. This Atropa belladonna (Belladonna) protein is DNA-directed RNA polymerase subunit alpha.